The following is a 331-amino-acid chain: Beta-ketoacyl-[acyl-carrier-protein] synthase III (331 aa).

Residues C116 and H256 contribute to the active site. Residues 257–261 (QANTR) are ACP-binding. Residue N286 is part of the active site.

It belongs to the thiolase-like superfamily. FabH family. As to quaternary structure, homodimer.

The protein localises to the cytoplasm. It catalyses the reaction malonyl-[ACP] + acetyl-CoA + H(+) = 3-oxobutanoyl-[ACP] + CO2 + CoA. It participates in lipid metabolism; fatty acid biosynthesis. Catalyzes the condensation reaction of fatty acid synthesis by the addition to an acyl acceptor of two carbons from malonyl-ACP. Catalyzes the first condensation reaction which initiates fatty acid synthesis and may therefore play a role in governing the total rate of fatty acid production. Possesses both acetoacetyl-ACP synthase and acetyl transacylase activities. Its substrate specificity determines the biosynthesis of branched-chain and/or straight-chain of fatty acids. The protein is Beta-ketoacyl-[acyl-carrier-protein] synthase III of Caldanaerobacter subterraneus subsp. tengcongensis (strain DSM 15242 / JCM 11007 / NBRC 100824 / MB4) (Thermoanaerobacter tengcongensis).